The chain runs to 277 residues: Undecaprenyl-diphosphatase (277 aa).

A run of 7 helical transmembrane segments spans residues 3-23 (IVLL…EFLP), 43-63 (VGKV…ILVY), 85-105 (LNVL…GKAI), 109-129 (LFTP…ILWA), 189-209 (TDFS…YSLF), 218-238 (ADLP…WLCI), and 249-269 (SFVG…ATAW).

This sequence belongs to the UppP family.

The protein resides in the cell inner membrane. The enzyme catalyses di-trans,octa-cis-undecaprenyl diphosphate + H2O = di-trans,octa-cis-undecaprenyl phosphate + phosphate + H(+). Catalyzes the dephosphorylation of undecaprenyl diphosphate (UPP). Confers resistance to bacitracin. This chain is Undecaprenyl-diphosphatase, found in Albidiferax ferrireducens (strain ATCC BAA-621 / DSM 15236 / T118) (Rhodoferax ferrireducens).